Consider the following 310-residue polypeptide: Vomeronasal type-1 receptor 3 (310 aa).

Topologically, residues 1–5 (MASKD) are extracellular. The helical transmembrane segment at 6–26 (FAIGMILSQIMVGFLGNFFLL) threads the bilayer. Over 27–50 (YHYSFLHFTRGMLQSTDLTLKHLT) the chain is Cytoplasmic. The helical transmembrane segment at 51-71 (IANSLVILSKGIPQTMAAFGL) threads the bilayer. The Extracellular segment spans residues 72–91 (KDSLSDIGCKFVFYVHRVGR). A helical transmembrane segment spans residues 92–112 (AVCTGNACLLSVFQVITISSS). At 113–129 (EFRWAELKLHAHKYIRS) the chain is on the cytoplasmic side. A helical transmembrane segment spans residues 130-150 (FILVLCWILNTLVNITVPLHV). Over 151 to 186 (TGKWNSINSTKTNDYGYCSGGSRSRIPHSLHIVLLS) the chain is Extracellular. N-linked (GlcNAc...) asparagine glycosylation occurs at Asn-158. A helical membrane pass occupies residues 187 to 207 (SLDVLCLGLMTLASGSMVFIL). At 208–235 (HRLKQQVQHIHGTNLSPRSSPESRVTQS) the chain is on the cytoplasmic side. The chain crosses the membrane as a helical span at residues 236–258 (ILVLVSTLCYFTRSPPSLHMSLF). Topologically, residues 259-263 (PNPSW) are extracellular. A helical transmembrane segment spans residues 264–284 (WPLNASALITACFPTVSPFVL). The Cytoplasmic segment spans residues 285–310 (MSRHPRIPRLGSACCGRNPQFPKLVR).

Belongs to the G-protein coupled receptor 1 family.

The protein resides in the cell membrane. Its function is as follows. Putative pheromone receptor. The sequence is that of Vomeronasal type-1 receptor 3 (VN1R3) from Pan troglodytes (Chimpanzee).